A 273-amino-acid polypeptide reads, in one-letter code: Dermonecrotic toxin LruSicTox-alphaIC1d (273 aa).

H5 is an active-site residue. Mg(2+) contacts are provided by E25 and D27. H41 (nucleophile) is an active-site residue. Disulfide bonds link C45–C51 and C47–C190. D85 is a Mg(2+) binding site.

It belongs to the arthropod phospholipase D family. Class II subfamily. The cofactor is Mg(2+). As to expression, expressed by the venom gland.

The protein localises to the secreted. The catalysed reaction is an N-(acyl)-sphingosylphosphocholine = an N-(acyl)-sphingosyl-1,3-cyclic phosphate + choline. The enzyme catalyses an N-(acyl)-sphingosylphosphoethanolamine = an N-(acyl)-sphingosyl-1,3-cyclic phosphate + ethanolamine. It catalyses the reaction a 1-acyl-sn-glycero-3-phosphocholine = a 1-acyl-sn-glycero-2,3-cyclic phosphate + choline. It carries out the reaction a 1-acyl-sn-glycero-3-phosphoethanolamine = a 1-acyl-sn-glycero-2,3-cyclic phosphate + ethanolamine. Its function is as follows. Dermonecrotic toxins cleave the phosphodiester linkage between the phosphate and headgroup of certain phospholipids (sphingolipid and lysolipid substrates), forming an alcohol (often choline) and a cyclic phosphate. This toxin acts on sphingomyelin (SM). It may also act on ceramide phosphoethanolamine (CPE), lysophosphatidylcholine (LPC) and lysophosphatidylethanolamine (LPE), but not on lysophosphatidylserine (LPS), and lysophosphatidylglycerol (LPG). It acts by transphosphatidylation, releasing exclusively cyclic phosphate products as second products. Induces dermonecrosis, hemolysis, increased vascular permeability, edema, inflammatory response, and platelet aggregation. This chain is Dermonecrotic toxin LruSicTox-alphaIC1d, found in Loxosceles rufescens (Mediterranean recluse spider).